Consider the following 276-residue polypeptide: 3beta-hydroxysteroid dehydrogenase (276 aa).

NADP(+) is bound by residues 70–71 (DV), asparagine 97, tyrosine 162, and lysine 166. Tyrosine 162 (proton acceptor) is an active-site residue.

It belongs to the short-chain dehydrogenases/reductases (SDR) family.

It catalyses the reaction 3-oxo-5beta-cholan-24-oate + NADPH + H(+) = isolithocholate + NADP(+). The catalysed reaction is 12alpha-hydroxy-3-oxo-5beta-cholan-24-oate + NADPH + H(+) = isodeoxycholate + NADP(+). The enzyme catalyses 12alpha-hydroxy-3-oxo-5beta-cholan-24-oate + NADH + H(+) = isodeoxycholate + NAD(+). It carries out the reaction 7alpha,12alpha-dihydroxy-3-oxo-5beta-cholan-24-oate + NADPH + H(+) = isocholate + NADP(+). It catalyses the reaction 3-oxochenodeoxycholate + NADPH + H(+) = isochenodeoxycholate + NADP(+). Functionally, involved in the modification of secondary bile acids into iso-bile acids (3beta-bile acids) via epimerization of the 3-OH group through a 3-oxo-intermediate. Catalyzes the reduction of 12-alpha-hydroxy-3-oxo-5-beta-cholan-24-oate (3-oxo-DCA) and 3-oxo-5-beta-cholan-24-oate (3-oxo-LCA) to yield isodeoxycholate (isoDCA) and isolithocholate (isoLCA), respectively. Is also able to catalyze the reduction of 3-dehydrocholate (3-oxo-CA or 7alpha,12alpha-dihydroxy-3-oxo-5beta-cholan-24-oate) and 7-alpha-hydroxy-3-oxo-5-beta-cholan-24-oate (3-oxo-CDCA), into isocholate (isoCA) and isochenodeoxycholate (isoCDCA), respectively. Accepts both NADPH and NADH as cosubstrates. The conversion of the abundant bile acid deoxycholate (DCA) into isoDCA by the gut bacterium R.gnavus favors the growth of the keystone commensal genus Bacteroides, since isoDCA is less cytotoxic than its parent compound, DCA; iso-bile acids have thus a potential role in modulating gut community composition. The sequence is that of 3beta-hydroxysteroid dehydrogenase from Mediterraneibacter gnavus (strain ATCC 29149 / DSM 114966 / JCM 6515 / VPI C7-9) (Ruminococcus gnavus).